The chain runs to 138 residues: Histone H2B (138 aa).

Residues 1-10 (MPPKAAEKKP) show a composition bias toward basic and acidic residues. The disordered stretch occupies residues 1 to 47 (MPPKAAEKKPSTAGKAPAGKAPEKKEAGKKTTAAGGEKKKRSKTRKE). N6-acetyllysine; alternate is present on residues K8 and K9. Glycyl lysine isopeptide (Lys-Gly) (interchain with G-Cter in SUMO); alternate cross-links involve residues K8 and K9. Residues 11–20 (STAGKAPAGK) are compositionally biased toward low complexity. K15 carries the N6-acetyllysine modification. K24 carries the post-translational modification N6-acetyllysine; alternate. K24 is covalently cross-linked (Glycyl lysine isopeptide (Lys-Gly) (interchain with G-Cter in SUMO); alternate). A Glycyl lysine isopeptide (Lys-Gly) (interchain with G-Cter in SUMO) cross-link involves residue K25. Residue K132 forms a Glycyl lysine isopeptide (Lys-Gly) (interchain with G-Cter in ubiquitin) linkage.

Belongs to the histone H2B family. In terms of assembly, the nucleosome is a histone octamer containing two molecules each of H2A, H2B, H3 and H4 assembled in one H3-H4 heterotetramer and two H2A-H2B heterodimers. The octamer wraps approximately 147 bp of DNA. Monoubiquitinated to form H2BK123ub1. H2BK123ub1 gives a specific tag for epigenetic transcriptional activation and is also prerequisite for H3K4me and H3K79me formation. H2BK123ub1 also modulates the formation of double-strand breaks during meiosis and is a prerequisite for DNA-damage checkpoint activation. Post-translationally, acetylated by GCN5 to form H2BK11ac and H2BK16ac. H2BK16ac can also be formed by ESA1. Acetylation of N-terminal lysines and particularly formation of H2BK11acK16ac has a positive effect on transcription. In terms of processing, sumoylation to form H2BK6su or H2BK7su, and probably also H2BK16su or H2BK17su, occurs preferentially near the telomeres and represses gene transcription.

It is found in the nucleus. The protein localises to the chromosome. Functionally, core component of nucleosome. Nucleosomes wrap and compact DNA into chromatin, limiting DNA accessibility to the cellular machineries which require DNA as a template. Histones thereby play a central role in transcription regulation, DNA repair, DNA replication and chromosomal stability. DNA accessibility is regulated via a complex set of post-translational modifications of histones, also called histone code, and nucleosome remodeling. This chain is Histone H2B (HTB1), found in Ajellomyces capsulatus (Darling's disease fungus).